The sequence spans 547 residues: uncharacterized protein (547 aa).

The protein to B.pertussis prn N-terminal region.

This is an uncharacterized protein from Escherichia coli O157:H7.